The sequence spans 486 residues: Malonate-semialdehyde dehydrogenase 2 (486 aa).

Residues F154, K178, E181, R182, and S231 each contribute to the NAD(+) site. The active-site Nucleophile is the C286. E385 contributes to the NAD(+) binding site.

Belongs to the aldehyde dehydrogenase family. IolA subfamily. As to quaternary structure, homotetramer.

It carries out the reaction 3-oxopropanoate + NAD(+) + CoA + H2O = hydrogencarbonate + acetyl-CoA + NADH + H(+). It catalyses the reaction 2-methyl-3-oxopropanoate + NAD(+) + CoA + H2O = propanoyl-CoA + hydrogencarbonate + NADH + H(+). It participates in polyol metabolism; myo-inositol degradation into acetyl-CoA; acetyl-CoA from myo-inositol: step 7/7. Functionally, catalyzes the oxidation of malonate semialdehyde (MSA) and methylmalonate semialdehyde (MMSA) into acetyl-CoA and propanoyl-CoA, respectively. Is involved in a myo-inositol catabolic pathway. Bicarbonate, and not CO2, is the end-product of the enzymatic reaction. This Shouchella clausii (strain KSM-K16) (Alkalihalobacillus clausii) protein is Malonate-semialdehyde dehydrogenase 2.